Consider the following 564-residue polypeptide: Mitochondrial distribution and morphology protein 34-1 (564 aa).

An SMP-LTD domain is found at 1 to 195 (MAFKFNWSPL…LPAIIHRLSL (195 aa)). Polar residues-rich tracts occupy residues 297 to 322 (PDQN…SQTG) and 329 to 352 (DNAS…SSYG). 3 disordered regions span residues 297–408 (PDQN…VTSA), 414–433 (HEQP…DQSL), and 452–473 (DLSS…PFNT). Basic residues predominate over residues 359 to 371 (RHSRAHARRRKKR). The span at 383–394 (SDSASVSVSDES) shows a compositional bias: low complexity. Residues 396–408 (YTESASAPSVTSA) are compositionally biased toward polar residues. Positions 452-466 (DLSSEIVRDRAEPSE) are enriched in basic and acidic residues.

It belongs to the MDM34 family. In terms of assembly, component of the ER-mitochondria encounter structure (ERMES) or MDM complex, composed of mmm1, mdm10, mdm12 and mdm34.

It localises to the mitochondrion outer membrane. Functionally, component of the ERMES/MDM complex, which serves as a molecular tether to connect the endoplasmic reticulum (ER) and mitochondria. Components of this complex are involved in the control of mitochondrial shape and protein biogenesis, and function in nonvesicular lipid trafficking between the ER and mitochondria. Mdm34 is required for the interaction of the ER-resident membrane protein mmm1 and the outer mitochondrial membrane-resident beta-barrel protein mdm10. This Penicillium rubens (strain ATCC 28089 / DSM 1075 / NRRL 1951 / Wisconsin 54-1255) (Penicillium chrysogenum) protein is Mitochondrial distribution and morphology protein 34-1.